We begin with the raw amino-acid sequence, 177 residues long: Ferritin heavy chain, oocyte isoform (177 aa).

Positions 7–156 constitute a Ferritin-like diiron domain; that stretch reads QNFHQECEAA…DHITNLRRMG (150 aa). Fe cation-binding residues include E24, E59, H62, E104, and Q138.

The protein belongs to the ferritin family. As to quaternary structure, oligomer of 24 subunits. There are two types of subunits: L (light) chain and H (heavy) chain. The functional molecule is roughly spherical and contains a central cavity into which the insoluble mineral iron core is deposited.

It is found in the cytoplasm. The catalysed reaction is 4 Fe(2+) + O2 + 4 H(+) = 4 Fe(3+) + 2 H2O. Stores iron in a soluble, non-toxic, readily available form. Important for iron homeostasis. Has ferroxidase activity. Iron is taken up in the ferrous form and deposited as ferric hydroxides after oxidation. The chain is Ferritin heavy chain, oocyte isoform from Xenopus laevis (African clawed frog).